Here is a 322-residue protein sequence, read N- to C-terminus: Ferrochelatase (322 aa).

Fe cation-binding residues include His-194 and Glu-275.

It belongs to the ferrochelatase family.

The protein resides in the cytoplasm. The catalysed reaction is heme b + 2 H(+) = protoporphyrin IX + Fe(2+). It participates in porphyrin-containing compound metabolism; protoheme biosynthesis; protoheme from protoporphyrin-IX: step 1/1. Functionally, catalyzes the ferrous insertion into protoporphyrin IX. The protein is Ferrochelatase of Yersinia enterocolitica serotype O:8 / biotype 1B (strain NCTC 13174 / 8081).